Consider the following 563-residue polypeptide: Arginine--tRNA ligase (563 aa).

The 'HIGH' region signature appears at 121-131 (PNIAKPFSIGH).

Belongs to the class-I aminoacyl-tRNA synthetase family. As to quaternary structure, monomer.

It is found in the cytoplasm. It carries out the reaction tRNA(Arg) + L-arginine + ATP = L-arginyl-tRNA(Arg) + AMP + diphosphate. The sequence is that of Arginine--tRNA ligase from Streptococcus pyogenes serotype M6 (strain ATCC BAA-946 / MGAS10394).